The primary structure comprises 198 residues: MDKKPCNSHDVEVRKGPWTMEEDLILINFISNHGEGVWNTIARSAGLKRTGKSCRLRWLNYLRPDVRRGNITPEEQLLIMELHAKWGNRWSKIAKHLPGRTDNEIKNYWNRTRIQKHIKQAEASFIGHINPEHSNEQASTSLLSSSCHADHAVESYSSSFNGNMGNNVQYPNHFPTESNDYFWSMEDLWSMQLPNNGG.

HTH myb-type domains are found at residues 10-62 (DVEV…LNYL) and 63-117 (RPDV…IQKH). 2 DNA-binding regions (H-T-H motif) span residues 38–62 (WNTI…LNYL) and 90–113 (WSKI…NRTR).

As to expression, expressed only in flowers.

The protein resides in the nucleus. Transcription factor. The sequence is that of Myb-related protein 340 from Antirrhinum majus (Garden snapdragon).